The primary structure comprises 468 residues: Acyltransferase R4 (468 aa).

Transmembrane regions (helical) follow at residues 21-41 (GILS…LGYD), 70-90 (LFTI…CLFF), 133-153 (LNLL…TGFF), 252-272 (FLAA…PLFW), 308-328 (DPFG…YPTW), 388-408 (FAVY…LFSW), and 423-443 (IGFG…AAMF).

The protein belongs to the acyltransferase 3 family.

The protein localises to the membrane. It functions in the pathway secondary metabolite biosynthesis. Acyltransferase; part of the gene cluster that mediates the biosynthesis of squalestatin S1 (SQS1, also known as zaragozic acid A), a heavily oxidized fungal polyketide that offers potent cholesterol lowering activity by targeting squalene synthase (SS). SQS1 is composed of a 2,8-dioxobicyclic[3.2.1]octane-3,4,5-tricarboxyclic acid core that is connected to two lipophilic polyketide arms. These initial steps feature the priming of an unusual benzoic acid starter unit onto the highly reducing polyketide synthase pks2, followed by oxaloacetate extension and product release to generate a tricarboxylic acid containing product. The phenylalanine ammonia lyase (PAL) M7 and the acyl-CoA ligase M9 are involved in transforming phenylalanine into benzoyl-CoA. The citrate synthase-like protein R3 is involved in connecting the C-alpha-carbons of the hexaketide chain and oxaloacetate to afford the tricarboxylic acid unit. The potential hydrolytic enzymes, M8 and M10, are in close proximity to pks2 and may participate in product release. On the other side, the tetraketide arm is synthesized by a the squalestatin tetraketide synthase pks1 and enzymatically esterified to the core in the last biosynthetic step, by the acetyltransferase M4. The biosynthesis of the tetraketide must involve 3 rounds of chain extension. After the first and second rounds methyl-transfer occurs, and in all rounds of extension the ketoreductase and dehydratase are active. The enoyl reductase and C-MeT of pks1 are not active in the final round of extension. The acetyltransferase M4 appears to have a broad substrate selectivity for its acyl CoA substrate, allowing the in vitro synthesis of novel squalestatins. The biosynthesis of SQS1 requires several oxidative steps likely performed by oxidoreductases M1, R1 and R2. Finally, in support of the identification of the cluster as being responsible for SQS1 production, the cluster contains a gene encoding a putative squalene synthase (SS) R6, suggesting a likely mechanism for self-resistance. The protein is Acyltransferase R4 of Phoma sp. (strain ATCC 20986 / MF5453).